Consider the following 181-residue polypeptide: Probable chemoreceptor glutamine deamidase CheD (181 aa).

The protein belongs to the CheD family.

It catalyses the reaction L-glutaminyl-[protein] + H2O = L-glutamyl-[protein] + NH4(+). Functionally, probably deamidates glutamine residues to glutamate on methyl-accepting chemotaxis receptors (MCPs), playing an important role in chemotaxis. This chain is Probable chemoreceptor glutamine deamidase CheD, found in Agrobacterium fabrum (strain C58 / ATCC 33970) (Agrobacterium tumefaciens (strain C58)).